The chain runs to 383 residues: Heme chaperone HemW (383 aa).

Residues 1–241 (MPKLPPLSLY…LTMAGYQQYE (241 aa)) enclose the Radical SAM core domain. Tyrosine 10 provides a ligand contact to S-adenosyl-L-methionine. Positions 16, 20, and 23 each coordinate [4Fe-4S] cluster. Residues glycine 70, 71-72 (GT), glutamate 103, glutamine 130, arginine 142, and aspartate 167 each bind S-adenosyl-L-methionine.

The protein belongs to the anaerobic coproporphyrinogen-III oxidase family. HemW subfamily. The cofactor is [4Fe-4S] cluster.

The protein resides in the cytoplasm. In terms of biological role, probably acts as a heme chaperone, transferring heme to an unknown acceptor. Binds one molecule of heme per monomer, possibly covalently. Binds 1 [4Fe-4S] cluster. The cluster is coordinated with 3 cysteines and an exchangeable S-adenosyl-L-methionine. The polypeptide is Heme chaperone HemW (Haemophilus influenzae (strain ATCC 51907 / DSM 11121 / KW20 / Rd)).